The following is a 283-amino-acid chain: Shikimate kinase (283 aa).

An ATP-binding site is contributed by 86-96 (PIKSGLSSSSA).

This sequence belongs to the GHMP kinase family. Archaeal shikimate kinase subfamily.

It is found in the cytoplasm. The enzyme catalyses shikimate + ATP = 3-phosphoshikimate + ADP + H(+). The protein operates within metabolic intermediate biosynthesis; chorismate biosynthesis; chorismate from D-erythrose 4-phosphate and phosphoenolpyruvate: step 5/7. In Methanococcus maripaludis (strain C5 / ATCC BAA-1333), this protein is Shikimate kinase.